A 210-amino-acid polypeptide reads, in one-letter code: MDLHNIREDYSKRELSEGDCADNPIEQFERWLDEAVRAEVNEPTAVNVAAVDGRGRPNSRMVLLKEVNSEGFVFFTNYHSRKGRSLDAHPFAAMTFFWPELERQVRVEGRVERLAEKLSDEYFESRPYQSRLGAWASAQSEVIPNKAVLVAKAAAVGLKHPLHVPRPPHWGGYIVIPDLLEFWQGRPSRLHDRIQYRLLDGGWIRERLSP.

Residues 7–10 (REDY) and lysine 65 each bind substrate. FMN is bound by residues 60–65 (RMVLLK), 75–76 (FT), arginine 81, lysine 82, and glutamine 104. Substrate is bound by residues tyrosine 122, arginine 126, and serine 130. FMN contacts are provided by residues 139-140 (QS) and tryptophan 183. Substrate is bound at residue 189–191 (RLH). Arginine 193 is a binding site for FMN.

This sequence belongs to the pyridoxamine 5'-phosphate oxidase family. Homodimer. Requires FMN as cofactor.

The enzyme catalyses pyridoxamine 5'-phosphate + O2 + H2O = pyridoxal 5'-phosphate + H2O2 + NH4(+). The catalysed reaction is pyridoxine 5'-phosphate + O2 = pyridoxal 5'-phosphate + H2O2. Its pathway is cofactor metabolism; pyridoxal 5'-phosphate salvage; pyridoxal 5'-phosphate from pyridoxamine 5'-phosphate: step 1/1. It functions in the pathway cofactor metabolism; pyridoxal 5'-phosphate salvage; pyridoxal 5'-phosphate from pyridoxine 5'-phosphate: step 1/1. Functionally, catalyzes the oxidation of either pyridoxine 5'-phosphate (PNP) or pyridoxamine 5'-phosphate (PMP) into pyridoxal 5'-phosphate (PLP). The protein is Pyridoxine/pyridoxamine 5'-phosphate oxidase of Neisseria meningitidis serogroup C (strain 053442).